A 430-amino-acid polypeptide reads, in one-letter code: Tyrosine--tRNA ligase (430 aa).

An L-tyrosine-binding site is contributed by Y32. Positions 37 to 46 (PTADSLHIGH) match the 'HIGH' region motif. The L-tyrosine site is built by Y172 and Q176. The 'KMSKS' region signature appears at 232–236 (KFGKT). An ATP-binding site is contributed by K235. Positions 362–430 (ISLVDLLADA…KKSYYLIIVE (69 aa)) constitute an S4 RNA-binding domain.

The protein belongs to the class-I aminoacyl-tRNA synthetase family. TyrS type 1 subfamily. As to quaternary structure, homodimer.

It is found in the cytoplasm. The catalysed reaction is tRNA(Tyr) + L-tyrosine + ATP = L-tyrosyl-tRNA(Tyr) + AMP + diphosphate + H(+). Functionally, catalyzes the attachment of tyrosine to tRNA(Tyr) in a two-step reaction: tyrosine is first activated by ATP to form Tyr-AMP and then transferred to the acceptor end of tRNA(Tyr). This is Tyrosine--tRNA ligase from Porphyromonas gingivalis (strain ATCC 33277 / DSM 20709 / CIP 103683 / JCM 12257 / NCTC 11834 / 2561).